Reading from the N-terminus, the 195-residue chain is Probable peroxygenase 4 (195 aa).

Positions 14 to 49 (EEDNFLQRHVAFFDRNKDGIVYPSETFQGFRAIGCG) constitute an EF-hand domain. Residue His-22 participates in heme binding. 4 residues coordinate Ca(2+): Asp-27, Asn-29, Asp-31, and Glu-38. The Proline-knot motif lies at 70-79 (PGKGFSIWFP). A Phosphoserine modification is found at Ser-177.

The protein belongs to the caleosin family. As to quaternary structure, homodimer. It depends on heme b as a cofactor. Ca(2+) serves as cofactor. Expressed in roots, leaves, stems, shoots, flowers and germinated seeds. Barely detected in dry seeds prior to germination. Preferentially expressed in vascular bundles and in guard cells.

The protein resides in the lipid droplet. The catalysed reaction is RH + ROOH = ROH + ROH.. In terms of biological role, calcium-binding peroxygenase involved in the degradation of storage lipid in oil bodies. May be involved in the interaction between oil bodies and vacuoles during seed germination. Acts as a negative regulator of abscisic acid responses in non-seed tissues. The sequence is that of Probable peroxygenase 4 (PXG4) from Arabidopsis thaliana (Mouse-ear cress).